Consider the following 1026-residue polypeptide: Multidrug resistance protein MdtC (1026 aa).

The next 11 helical transmembrane spans lie at 16-36, 333-353, 360-380, 387-407, 435-455, 459-479, 528-548, 853-873, 897-917, 953-973, and 984-1004; these read LLAL…PVAP, EVEQ…FLFL, LIPA…IYLC, LSLM…IVVL, VFSI…MGGI, LFHE…LIAL, WVLL…ISIP, LLLI…LYES, LFNA…IGLV, PILM…FSYG, and ITIV…TPVV.

Belongs to the resistance-nodulation-cell division (RND) (TC 2.A.6) family. MdtC subfamily. As to quaternary structure, part of a tripartite efflux system composed of MdtA, MdtB and MdtC. MdtC forms a heteromultimer with MdtB.

Its subcellular location is the cell inner membrane. The protein is Multidrug resistance protein MdtC of Edwardsiella ictaluri (strain 93-146).